The chain runs to 519 residues: Acetylcholine receptor subunit gamma (519 aa).

Positions 1–22 (MCGGQRPLFLLPLLAVCLGAKG) are cleaved as a signal peptide. At 23–240 (RNQEERLLGD…VVFYLLIQRK (218 aa)) the chain is on the extracellular side. 2 N-linked (GlcNAc...) asparagine glycosylation sites follow: asparagine 52 and asparagine 163. Cysteine 150 and cysteine 164 are disulfide-bonded. A run of 3 helical transmembrane segments spans residues 241–265 (PLFY…IYFL), 274–292 (CTVA…FLVA), and 308–329 (YLTF…VLNV). At 330-476 (SLRSPHTHSM…WFLVGRVLDR (147 aa)) the chain is on the cytoplasmic side. A helical transmembrane segment spans residues 477–497 (VCFLAMLSLFVCGTAGIFLMA).

The protein belongs to the ligand-gated ion channel (TC 1.A.9) family. Acetylcholine receptor (TC 1.A.9.1) subfamily. Gamma/CHRNG sub-subfamily. Pentamer of two alpha chains, and one each of the beta, delta, and gamma (in immature muscle) or epsilon (in mature muscle) chains.

It localises to the postsynaptic cell membrane. It is found in the cell membrane. The catalysed reaction is K(+)(in) = K(+)(out). The enzyme catalyses Na(+)(in) = Na(+)(out). In terms of biological role, after binding acetylcholine, the AChR responds by an extensive change in conformation that affects all subunits and leads to opening of an ion-conducting channel across the plasma membrane. This Bos taurus (Bovine) protein is Acetylcholine receptor subunit gamma (CHRNG).